The following is a 59-amino-acid chain: MNFNKLFAIVLLAALVLLGQTEAGGLKKFGKKLEGVGKRVFKASEKALPVAVGIKALGK.

Positions 1–23 (MNFNKLFAIVLLAALVLLGQTEA) are cleaved as a signal peptide.

It belongs to the cecropin family.

It localises to the secreted. Cecropins have lytic and antibacterial activity against several Gram-positive and Gram-negative bacteria. The chain is Cecropin-A2 (CECA2) from Aedes albopictus (Asian tiger mosquito).